The primary structure comprises 285 residues: Protein unc-1 (285 aa).

Transmembrane regions (helical) follow at residues 27–47 (IGTI…IVTF) and 69–89 (IGRL…IPCI).

It belongs to the band 7/mec-2 family.

It is found in the cell membrane. The protein resides in the cell junction. The protein localises to the gap junction. In Caenorhabditis elegans, this protein is Protein unc-1 (unc-1).